The sequence spans 47 residues: Potassium channel toxin TcoKIK (47 aa).

Residues 14 to 47 (EYACPAIDKFCEDHCAAKKAVGKCDDFKCNCIKL) enclose the BetaSPN-type CS-alpha/beta domain. Intrachain disulfides connect cysteine 17–cysteine 37, cysteine 24–cysteine 42, and cysteine 28–cysteine 44.

The protein belongs to the long chain scorpion toxin family. Class 2 subfamily. As to expression, expressed by the venom gland.

The protein localises to the secreted. Its subcellular location is the target cell membrane. Its function is as follows. Blocks voltage-gated potassium channels. Its application (10 uM) to cells recombinantly expressing channels results in membrane damage and cell lysis. The protein is Potassium channel toxin TcoKIK of Tityus costatus (Brazilian scorpion).